The following is a 96-amino-acid chain: Aspartyl/glutamyl-tRNA(Asn/Gln) amidotransferase subunit C (96 aa).

Positions 64–96 (REDEPEPGLPREEVLKNAPDQQDGQFRVPAILE) are disordered.

The protein belongs to the GatC family. Heterotrimer of A, B and C subunits.

It carries out the reaction L-glutamyl-tRNA(Gln) + L-glutamine + ATP + H2O = L-glutaminyl-tRNA(Gln) + L-glutamate + ADP + phosphate + H(+). The catalysed reaction is L-aspartyl-tRNA(Asn) + L-glutamine + ATP + H2O = L-asparaginyl-tRNA(Asn) + L-glutamate + ADP + phosphate + 2 H(+). Its function is as follows. Allows the formation of correctly charged Asn-tRNA(Asn) or Gln-tRNA(Gln) through the transamidation of misacylated Asp-tRNA(Asn) or Glu-tRNA(Gln) in organisms which lack either or both of asparaginyl-tRNA or glutaminyl-tRNA synthetases. The reaction takes place in the presence of glutamine and ATP through an activated phospho-Asp-tRNA(Asn) or phospho-Glu-tRNA(Gln). This Geobacillus thermodenitrificans (strain NG80-2) protein is Aspartyl/glutamyl-tRNA(Asn/Gln) amidotransferase subunit C.